Consider the following 328-residue polypeptide: Olfactory receptor 13A1 (328 aa).

The Extracellular segment spans residues 1–43 (MKLWMESHLIVPETRPSPRMMSNQTLVTEFILQGFSEHPEYRV). A glycan (N-linked (GlcNAc...) asparagine) is linked at Asn-23. The helical transmembrane segment at 44–64 (FLFSCFLFLYSGALTGNVLIT) threads the bilayer. The Cytoplasmic segment spans residues 65–72 (LAITFNPG). A helical transmembrane segment spans residues 73–93 (LHAPMYFFLLNLATMDIICTS). Residues 94 to 117 (SIMPKALASLVSEESSISYGGCMA) lie on the Extracellular side of the membrane. A disulfide bond links Cys-115 and Cys-207. The helical transmembrane segment at 118-138 (QLYFLTWAASSELLLLTVMAY) threads the bilayer. At 139 to 157 (DRYAAICHPLHYSSMMSKV) the chain is on the cytoplasmic side. The chain crosses the membrane as a helical span at residues 158 to 178 (FCSGLATAVWLLCAVNTAIHT). The Extracellular segment spans residues 179–215 (GLMLRLDFCGPNVIIHFFCEVPPLLLLSCSSTYVNGV). The helical transmembrane segment at 216-235 (MIVLADAFYGIVNFLMTIAS) threads the bilayer. The Cytoplasmic portion of the chain corresponds to 236–255 (YGFIVSSILKVKTAWGRQKA). The chain crosses the membrane as a helical span at residues 256 to 276 (FSTCSSHLTVVCMYYTAVFYA). Over 277–289 (YISPVSGYSAGKS) the chain is Extracellular. A helical transmembrane segment spans residues 290-310 (KLAGLLYTVLSPTLNPLIYTL). Residues 311-328 (RNKEVKAALRKLFPFFRN) are Cytoplasmic-facing.

It belongs to the G-protein coupled receptor 1 family.

It is found in the cell membrane. Odorant receptor. This is Olfactory receptor 13A1 (OR13A1) from Homo sapiens (Human).